The chain runs to 196 residues: Imidazoleglycerol-phosphate dehydratase (196 aa).

Belongs to the imidazoleglycerol-phosphate dehydratase family.

Its subcellular location is the cytoplasm. The catalysed reaction is D-erythro-1-(imidazol-4-yl)glycerol 3-phosphate = 3-(imidazol-4-yl)-2-oxopropyl phosphate + H2O. The protein operates within amino-acid biosynthesis; L-histidine biosynthesis; L-histidine from 5-phospho-alpha-D-ribose 1-diphosphate: step 6/9. This chain is Imidazoleglycerol-phosphate dehydratase, found in Ralstonia pickettii (strain 12J).